A 167-amino-acid polypeptide reads, in one-letter code: Neutrophilic granule protein (167 aa).

The signal sequence occupies residues 1-21 (MAGLWKTFVLVVALAVVSCEA). A disordered region spans residues 122–141 (EDTQETSFNDKQDVSEKEKF).

Belongs to the cathelicidin family. In terms of assembly, monomer. Homodimer; disulfide-linked. As to expression, expressed in myeloid bone marrow cells. Expressed in neutrophilic precursors (at protein level). Expressed in myeloid bone marrow cells.

The protein localises to the secreted. It is found in the cytoplasmic granule. Functionally, acts as an inhibitor of cathepsin B (CTSB) activity. Plays a role as a negative regulator of tumor vascular development, cell invasion and metastasis. The polypeptide is Neutrophilic granule protein (Mus musculus (Mouse)).